Reading from the N-terminus, the 614-residue chain is Probable Xaa-Pro aminopeptidase P (614 aa).

Residues aspartate 411, aspartate 422, glutamate 520, and glutamate 534 each coordinate Mn(2+).

This sequence belongs to the peptidase M24B family. It depends on Mn(2+) as a cofactor.

It catalyses the reaction Release of any N-terminal amino acid, including proline, that is linked to proline, even from a dipeptide or tripeptide.. Catalyzes the removal of a penultimate prolyl residue from the N-termini of peptides. This chain is Probable Xaa-Pro aminopeptidase P (AMPP), found in Sordaria macrospora (strain ATCC MYA-333 / DSM 997 / K(L3346) / K-hell).